The following is a 249-amino-acid chain: Esterase YjfP (249 aa).

Its function is as follows. Displays esterase activity toward palmitoyl-CoA and pNP-butyrate. This is Esterase YjfP (yjfP) from Escherichia coli (strain K12).